Consider the following 545-residue polypeptide: Glucose-6-phosphate isomerase (545 aa).

The Proton donor role is filled by Glu345. Active-site residues include His376 and Lys514.

It belongs to the GPI family.

Its subcellular location is the cytoplasm. It carries out the reaction alpha-D-glucose 6-phosphate = beta-D-fructose 6-phosphate. The protein operates within carbohydrate biosynthesis; gluconeogenesis. Its pathway is carbohydrate degradation; glycolysis; D-glyceraldehyde 3-phosphate and glycerone phosphate from D-glucose: step 2/4. Its function is as follows. Catalyzes the reversible isomerization of glucose-6-phosphate to fructose-6-phosphate. The polypeptide is Glucose-6-phosphate isomerase (Leptothrix cholodnii (strain ATCC 51168 / LMG 8142 / SP-6) (Leptothrix discophora (strain SP-6))).